The chain runs to 96 residues: Protein Vpr (96 aa).

The tract at residues 1 to 42 (MEQAPEDQGPQREPYHEWTLELLEELKNEAVRHFPRPWLHGL) is homooligomerization. Residues Ser-79, Ser-94, and Ser-96 each carry the phosphoserine; by host modification.

It belongs to the HIV-1 VPR protein family. As to quaternary structure, homooligomer, may form homodimer. Interacts with p6-gag region of the Pr55 Gag precursor protein through a (Leu-X-X)4 motif near the C-terminus of the P6gag protein. Interacts with host UNG. May interact with host RAD23A/HHR23A. Interacts with host VPRBP/DCAF1, leading to hijack the CUL4A-RBX1-DDB1-DCAF1/VPRBP complex, mediating ubiquitination of host proteins such as TERT and ZGPAT and arrest of the cell cycle in G2 phase. Post-translationally, phosphorylated on several residues by host. These phosphorylations regulate VPR activity for the nuclear import of the HIV-1 pre-integration complex.

It is found in the virion. The protein resides in the host nucleus. The protein localises to the host extracellular space. Functionally, during virus replication, may deplete host UNG protein, and incude G2-M cell cycle arrest. Acts by targeting specific host proteins for degradation by the 26S proteasome, through association with the cellular CUL4A-DDB1 E3 ligase complex by direct interaction with host VPRPB/DCAF-1. Cell cycle arrest reportedly occurs within hours of infection and is not blocked by antiviral agents, suggesting that it is initiated by the VPR carried into the virion. Additionally, VPR induces apoptosis in a cell cycle dependent manner suggesting that these two effects are mechanistically linked. Detected in the serum and cerebrospinal fluid of AIDS patient, VPR may also induce cell death to bystander cells. Its function is as follows. During virus entry, plays a role in the transport of the viral pre-integration (PIC) complex to the host nucleus. This function is crucial for viral infection of non-dividing macrophages. May act directly at the nuclear pore complex, by binding nucleoporins phenylalanine-glycine (FG)-repeat regions. The chain is Protein Vpr from Homo sapiens (Human).